The sequence spans 1482 residues: Glutamate receptor ionotropic, NMDA 2B (1482 aa).

The first 26 residues, 1-26 (MKPSAECCSPKFWLVLAVLAVSGSKA), serve as a signal peptide directing secretion. The Extracellular portion of the chain corresponds to 27–557 (RSQKSAPSIG…SAFLEPFSAD (531 aa)). A glycan (N-linked (GlcNAc...) asparagine) is linked at N74. Residues C86 and C321 are joined by a disulfide bond. H127 and E284 together coordinate Zn(2+). N-linked (GlcNAc...) asparagine glycosylation is found at N341, N348, N444, and N491. Disulfide bonds link C429-C456 and C436-C457. L-glutamate is bound by residues T514 and R519. N542 is a glycosylation site (N-linked (GlcNAc...) asparagine). The chain crosses the membrane as a helical span at residues 558–576 (VWVMMFVMLLIVSAVAVFV). The Cytoplasmic portion of the chain corresponds to 577–603 (FEYFSPVGYNRCLADGREPGGPSFTIG). Residues 604 to 623 (KAIWLLWGLVFNNSVPVQNP) constitute an intramembrane region (discontinuously helical). Positions 604–623 (KAIWLLWGLVFNNSVPVQNP) are pore-forming. Over 624 to 630 (KGTTSKI) the chain is Cytoplasmic. A helical membrane pass occupies residues 631 to 646 (MVSVWAFFAVIFLASY). Residues 647–817 (TANLAAFMIQ…VMSSQLDIDN (171 aa)) are Extracellular-facing. N688 carries N-linked (GlcNAc...) asparagine glycosylation. L-glutamate-binding positions include 690–691 (ST) and D732. C746 and C801 are oxidised to a cystine. A helical membrane pass occupies residues 818–837 (MAGVFYMLGAAMALSLITFI). At 838–1482 (CEHLFYWQFR…EKLSSIESDV (645 aa)) the chain is on the cytoplasmic side. Residues S882, S886, S917, and S920 each carry the phosphoserine modification. Phosphotyrosine is present on residues Y962 and Y1039. S1058, S1061, and S1064 each carry phosphoserine. Residues 1074–1097 (EGNAAKRRKQQYKDSLKKRPASAK) are disordered. Phosphotyrosine is present on residues Y1109 and Y1133. S1143 carries the post-translational modification Phosphoserine. A Phosphotyrosine modification is found at Y1155. Positions 1162 to 1194 (FKRDSVSGGGPCTNRSHLKHGTGDKHGVVGGVP) are disordered. A phosphoserine mark is found at S1255 and S1259. Low complexity predominate over residues 1266–1277 (PAAPVAVSSNAS). The tract at residues 1266–1301 (PAAPVAVSSNASTTKYPQSPTNSKAQKKNRNKLRRQ) is disordered. The segment covering 1278 to 1289 (TTKYPQSPTNSK) has biased composition (polar residues). The span at 1290-1301 (AQKKNRNKLRRQ) shows a compositional bias: basic residues. Residues 1292-1304 (KKNRNKLRRQHSY) are interaction with DAPK1. S1303 carries the post-translational modification Phosphoserine; by DAPK1. Y1472 bears the Phosphotyrosine mark. A PDZ-binding motif is present at residues 1480–1482 (SDV).

It belongs to the glutamate-gated ion channel (TC 1.A.10.1) family. NR2B/GRIN2B subfamily. As to quaternary structure, heterotetramer. Forms heterotetrameric channels composed of two GluN1/zeta subunits (GRIN1), and two identical GluN2/epsilon subunits (GRIN2A, GRIN2B, GRIN2C or GRIN2D) or GluN3 subunits (GRIN3A or GRIN3B) (in vitro). Can also form heterotetrameric channels that contain at least two GluN1 subunits and at least two different GluN2 subunits (or a combination of one GluN2 and one GluN3 subunits) (in vitro). In vivo, the subunit composition may depend on the expression levels of the different subunits. Found in a complex with GRIN1, GRIN3A and PPP2CB. Interacts with MAGI3. Interacts with HIP1 and NETO1. Interacts with PDZ domains of PATJ, DLG3 and DLG4. Interacts with DAPK1. Found in a complex with GRIN1 and PRR7. Interacts with PRR7. Interacts with CAMK2A. Interacts with ARC; preventing ARC oligomerization. Interacts with TMEM25. Interacts (via the extreme C-terminus) with FRMPD2 (via the second PDZ domain); the interaction is direct and is likely to promote NMDAR-mediated neural signal transmission. GRIN2A binds FRMPD2 with lower affinity than GRIN2B. Interacts with FAM81A; the interaction facilitates condensate formation via liquid-liquid phase separation. In terms of processing, phosphorylated on tyrosine residues. Phosphorylation at Ser-1303 by DAPK1 enhances synaptic NMDA receptor channel activity. In terms of tissue distribution, detected in brain (at protein level). Detected throughout the brain, and in brain stem trigeminal nucleus. Detected in forebrain.

It localises to the cell membrane. Its subcellular location is the postsynaptic cell membrane. The protein localises to the cell projection. The protein resides in the dendrite. It is found in the late endosome. It localises to the lysosome. Its subcellular location is the cytoplasm. The protein localises to the cytoskeleton. It catalyses the reaction Ca(2+)(in) = Ca(2+)(out). The catalysed reaction is Na(+)(in) = Na(+)(out). It carries out the reaction K(+)(in) = K(+)(out). Component of N-methyl-D-aspartate (NMDA) receptors (NMDARs) that function as heterotetrameric, ligand-gated cation channels with high calcium permeability and voltage-dependent block by Mg(2+). Participates in synaptic plasticity for learning and memory formation by contributing to the long-term depression (LTD) of hippocampus membrane currents. Channel activation requires binding of the neurotransmitter L-glutamate to the GluN2 subunit, glycine or D-serine binding to the GluN1 subunit, plus membrane depolarization to eliminate channel inhibition by Mg(2+). NMDARs mediate simultaneously the potasium efflux and the influx of calcium and sodium. Each GluN2 subunit confers differential attributes to channel properties, including activation, deactivation and desensitization kinetics, pH sensitivity, Ca2(+) permeability, and binding to allosteric modulators. In concert with DAPK1 at extrasynaptic sites, acts as a central mediator for stroke damage. Its phosphorylation at Ser-1303 by DAPK1 enhances synaptic NMDA receptor channel activity inducing injurious Ca2+ influx through them, resulting in an irreversible neuronal death. The protein is Glutamate receptor ionotropic, NMDA 2B of Mus musculus (Mouse).